A 328-amino-acid polypeptide reads, in one-letter code: Tetraacyldisaccharide 4'-kinase (328 aa).

An ATP-binding site is contributed by 55–62 (TAGGNGKT).

This sequence belongs to the LpxK family.

It catalyses the reaction a lipid A disaccharide + ATP = a lipid IVA + ADP + H(+). It functions in the pathway glycolipid biosynthesis; lipid IV(A) biosynthesis; lipid IV(A) from (3R)-3-hydroxytetradecanoyl-[acyl-carrier-protein] and UDP-N-acetyl-alpha-D-glucosamine: step 6/6. Functionally, transfers the gamma-phosphate of ATP to the 4'-position of a tetraacyldisaccharide 1-phosphate intermediate (termed DS-1-P) to form tetraacyldisaccharide 1,4'-bis-phosphate (lipid IVA). This is Tetraacyldisaccharide 4'-kinase from Escherichia coli (strain 55989 / EAEC).